The following is a 151-amino-acid chain: Odorant-binding protein (151 aa).

2 disulfides stabilise this stretch: Cys-38/Cys-42 and Cys-57/Cys-149.

The protein belongs to the calycin superfamily. Lipocalin family. In terms of tissue distribution, expressed in salivary glands, hair and urine.

The protein resides in the secreted. Functionally, may act as a pheromone. In Phodopus sungorus (Striped hairy-footed hamster), this protein is Odorant-binding protein.